A 505-amino-acid chain; its full sequence is MAMENPFEGKEIWFGVGSQDLYGEEALRQVAQQSAEIVDSLNASGRIPVKLVLKPTLKSSDGVRRFMVDASADDSCIGVITWMHTFSPAKMWIRGLEALRKPLLQLNTQHHFEIPWETIDMDFMNLNQAAHGDREYGYIVTRLGIPRKIVVGHYTDPAVADKIGVWARACAGWQASNTMNVMRWGDNMRNVAVTEGDKTEAERVFGASINTWAVNELVAAYDAVKENQIKDLIEDYKAKYEIAPELLDKDYDSLFIAAREECAMVNMMRANGCTAGVDNFEDLGALPQLPGVGPQRFPSEYGWGFSAEGDWKTAVLVRIGAVMGYGLEGGASLMEDYSYNFTPGNEMIMGSHMLEVSPSVGTIAKPRLEIHPLGIGGKADPVRLVFTVAPKKDAVVVSLADVRTRFRMLMNVVDVVEPLGSLDKLPCARALWKPEPNLEISAECWLRAGGSHHTCMTTSVGREAWEDFARIAGVELAAIDAETTPREFERELEIEDVFHELANRH.

Residues Glu-308, Glu-335, His-352, and His-453 each contribute to the Mn(2+) site.

It belongs to the arabinose isomerase family. Requires Mn(2+) as cofactor.

It carries out the reaction beta-L-arabinopyranose = L-ribulose. Its pathway is carbohydrate degradation; L-arabinose degradation via L-ribulose; D-xylulose 5-phosphate from L-arabinose (bacterial route): step 1/3. Functionally, catalyzes the conversion of L-arabinose to L-ribulose. In Bifidobacterium animalis subsp. lactis (strain AD011), this protein is L-arabinose isomerase.